Consider the following 437-residue polypeptide: Amino-acid acetyltransferase (437 aa).

The N-acetyltransferase domain maps to 289-429 (ENIRLATSFD…EHYNYQRMSK (141 aa)).

This sequence belongs to the acetyltransferase family. ArgA subfamily.

It is found in the cytoplasm. The catalysed reaction is L-glutamate + acetyl-CoA = N-acetyl-L-glutamate + CoA + H(+). The protein operates within amino-acid biosynthesis; L-arginine biosynthesis; N(2)-acetyl-L-ornithine from L-glutamate: step 1/4. This chain is Amino-acid acetyltransferase, found in Actinobacillus pleuropneumoniae serotype 3 (strain JL03).